Here is a 1161-residue protein sequence, read N- to C-terminus: Nardilysin (1161 aa).

A signal peptide spans 1 to 18 (MLRRVAVAAVFATGRKLR). Disordered stretches follow at residues 42–105 (KPFP…KSPS) and 130–218 (VEGK…KKTT). Phosphoserine is present on residues Ser-85, Ser-91, and Ser-93. Residues 138 to 209 (TDEEEEEEEE…EENELEELEE (72 aa)) are compositionally biased toward acidic residues. Zn(2+) is bound at residue His-244. Residue Glu-247 is the Proton acceptor of the active site. Zn(2+)-binding residues include His-248 and Glu-325.

It belongs to the peptidase M16 family. In terms of assembly, interacts with BACE1 and NRG1. The cofactor is Zn(2+). As to expression, testis, and in a lower level in brain, heart and adrenal glands.

The protein localises to the mitochondrion. It is found in the cell projection. The protein resides in the dendrite. It catalyses the reaction Hydrolysis of polypeptides, preferably at -Xaa-|-Arg-Lys-, and less commonly at -Arg-|-Arg-Xaa-, in which Xaa is not Arg or Lys.. Its function is as follows. Cleaves peptide substrates on the N-terminus of arginine residues in dibasic pairs. Is a critical activator of BACE1- and ADAM17-mediated pro-neuregulin ectodomain shedding, involved in the positive regulation of axonal maturation and myelination. Required for proper functioning of 2-oxoglutarate dehydrogenase (OGDH). The chain is Nardilysin from Rattus norvegicus (Rat).